The sequence spans 266 residues: Protein crossbronx-like (266 aa).

The UBC core domain occupies 15–178 (KQGYKILAEY…IQELAISSRR (164 aa)). The segment at 216–266 (EATCEDDSPPAELLGHIDSSRQLDEDEANQRGKLQAATTDLQHGARCSVAQ) is disordered.

The protein belongs to the ubiquitin-conjugating enzyme family. FTS subfamily.

This is Protein crossbronx-like from Drosophila ananassae (Fruit fly).